The sequence spans 183 residues: Adenine phosphoribosyltransferase 3 (183 aa).

The protein belongs to the purine/pyrimidine phosphoribosyltransferase family. As to quaternary structure, homodimer.

It is found in the cytoplasm. The catalysed reaction is AMP + diphosphate = 5-phospho-alpha-D-ribose 1-diphosphate + adenine. It functions in the pathway purine metabolism; AMP biosynthesis via salvage pathway; AMP from adenine: step 1/1. In terms of biological role, catalyzes a salvage reaction resulting in the formation of AMP, that is energically less costly than de novo synthesis. May contribute to the recycling of adenine into adenylate nucleotides and the inactivation of cytokinins by phosphoribosylation. Possesses low activity toward adenine and cytokinins. The protein is Adenine phosphoribosyltransferase 3 (APT3) of Arabidopsis thaliana (Mouse-ear cress).